The following is a 157-amino-acid chain: MSNLCPCNSQLPYSECCEPYLLGTKNAPTAQALMRSRYSAFVTHNADHLIKTWHPSCRTPSLRDELIATFPNTQWLGLHIISAQENPRDNEAFVEFSACFIEINADDKQYLHERSRFLKIDDCWFYIDGVQPKVGRNDPCPCGSGRKYKKCCEHNRK.

This sequence belongs to the UPF0225 family.

In Proteus mirabilis (strain HI4320), this protein is UPF0225 protein PMI1492.